The following is a 181-amino-acid chain: Adenine phosphoribosyltransferase (181 aa).

It belongs to the purine/pyrimidine phosphoribosyltransferase family. Homodimer.

Its subcellular location is the cytoplasm. It carries out the reaction AMP + diphosphate = 5-phospho-alpha-D-ribose 1-diphosphate + adenine. The protein operates within purine metabolism; AMP biosynthesis via salvage pathway; AMP from adenine: step 1/1. Its function is as follows. Catalyzes a salvage reaction resulting in the formation of AMP, that is energically less costly than de novo synthesis. The polypeptide is Adenine phosphoribosyltransferase (Shewanella amazonensis (strain ATCC BAA-1098 / SB2B)).